Consider the following 376-residue polypeptide: Queuine tRNA-ribosyltransferase (376 aa).

The active-site Proton acceptor is aspartate 89. Substrate contacts are provided by residues 89–93 (DSGGF), aspartate 143, glutamine 194, and glycine 221. The tract at residues 252–258 (GVGIPSN) is RNA binding. The active-site Nucleophile is aspartate 271. An RNA binding; important for wobble base 34 recognition region spans residues 276–280 (ARNGR). Positions 309, 311, 314, and 340 each coordinate Zn(2+).

It belongs to the queuine tRNA-ribosyltransferase family. As to quaternary structure, homodimer. Within each dimer, one monomer is responsible for RNA recognition and catalysis, while the other monomer binds to the replacement base PreQ1. It depends on Zn(2+) as a cofactor.

It catalyses the reaction 7-aminomethyl-7-carbaguanine + guanosine(34) in tRNA = 7-aminomethyl-7-carbaguanosine(34) in tRNA + guanine. It functions in the pathway tRNA modification; tRNA-queuosine biosynthesis. In terms of biological role, catalyzes the base-exchange of a guanine (G) residue with the queuine precursor 7-aminomethyl-7-deazaguanine (PreQ1) at position 34 (anticodon wobble position) in tRNAs with GU(N) anticodons (tRNA-Asp, -Asn, -His and -Tyr). Catalysis occurs through a double-displacement mechanism. The nucleophile active site attacks the C1' of nucleotide 34 to detach the guanine base from the RNA, forming a covalent enzyme-RNA intermediate. The proton acceptor active site deprotonates the incoming PreQ1, allowing a nucleophilic attack on the C1' of the ribose to form the product. After dissociation, two additional enzymatic reactions on the tRNA convert PreQ1 to queuine (Q), resulting in the hypermodified nucleoside queuosine (7-(((4,5-cis-dihydroxy-2-cyclopenten-1-yl)amino)methyl)-7-deazaguanosine). This chain is Queuine tRNA-ribosyltransferase, found in Clostridium botulinum (strain Okra / Type B1).